Reading from the N-terminus, the 1551-residue chain is Envelopment polyprotein (1551 aa).

Positions 1 to 17 (MSKRVLIIAVVVYLVFT) are cleaved as a signal peptide. The Lumenal segment spans residues 18–546 (TQNQITGNHT…CRMSSRPTVA (529 aa)). The disordered stretch occupies residues 24–66 (GNHTTINSSSPSTTEASSTPTVSRTPQTTTTSTAVSTTITATT). 2 N-linked (GlcNAc...) asparagine; by host glycosylation sites follow: Asn25 and Asn30. The span at 31-66 (SSSPSTTEASSTPTVSRTPQTTTTSTAVSTTITATT) shows a compositional bias: low complexity. Asn80, Asn142, and Asn413 each carry an N-linked (GlcNAc...) asparagine; by host glycan. The helical transmembrane segment at 547-567 (LLLGIWIGCGYILTCIFSFLL) threads the bilayer. Topologically, residues 568–675 (YHLILFFANC…ISVGIFLKRT (108 aa)) are cytoplasmic. The chain crosses the membrane as a helical span at residues 676-696 (TWLVVLLVLLGLAISPVQGAP). Residues 697-704 (TEVSNVKQ) lie on the Lumenal side of the membrane. Residues 705–725 (DGDYSICYFIFGCLVTAALLL) form a helical membrane-spanning segment. At 726-823 (KVKRTNSNGI…REKLFTTGLQ (98 aa)) the chain is on the cytoplasmic side. A helical transmembrane segment spans residues 824–844 (LFINKTNVVVFALIMCFLLLL). The Lumenal portion of the chain corresponds to 845–1451 (TGHNASAFDS…GDFFKHYIGS (607 aa)). N-linked (GlcNAc...) asparagine; by host glycans are attached at residues Asn848, Asn1201, Asn1258, and Asn1420. A disulfide bridge connects residues Cys1023 and Cys1216. Residues 1452–1472 (IAVGVLGTVLPFALLILFFIY) form a helical membrane-spanning segment. The Cytoplasmic portion of the chain corresponds to 1473–1551 (GDKMLWPFKV…KKEKKLSEIA (79 aa)).

This sequence belongs to the nairovirus envelope glycoprotein family. In terms of assembly, heterodimer with glycoprotein C; in prefusion state. As to quaternary structure, heterodimer with glycoprotein N; in prefusion state. Homotrimeric; in postfusion state. In terms of processing, specific enzymatic cleavage by host MBTPS1/S1P/SKI-1 endopeptidase yield glycoprotein N. Specific enzymatic cleavages by host furin-like protease and MBTPS1/S1P endopeptidase yield GP38. Post-translationally, glycosylated.

The protein localises to the host endoplasmic reticulum membrane. It is found in the virion membrane. It localises to the host Golgi apparatus membrane. Glycoprotein N and glycoprotein C interact with each other and are present at the surface of the virion. Glycoprotein N probably locks the Gn-Gc complex in a prefusion state. Glycoprotein N and glycoprotein C are able to attach the virion to host cell receptors. This attachment induces virion internalization predominantly through clathrin-dependent endocytosis. In terms of biological role, glycoprotein C and glycoprotein N interact with each other and are present at the surface of the virion. The spikes at the surface of the virion are formed by an N-terminal extension of glycoprotein C. Glycoprotein N and glycoprotein C are able to attach the virion to host cell receptors. This attachment induces virion internalization predominantly through clathrin-dependent endocytosis. Class II fusion protein that promotes fusion of viral membrane with host endosomal membrane after endocytosis of the virion. Exposure to potassium is necessary for the conformational change leading to fusion. The protein is Envelopment polyprotein (GP) of Amblyomma variegatum (Tropical bont tick).